The sequence spans 973 residues: UvrABC system protein A (973 aa).

Residue 34-41 (GLSGSGKS) coordinates ATP. ABC transporter domains lie at 331–609 (WAKS…PKSL) and 629–958 (PKKK…QFLK). Position 662–669 (662–669 (GVSGGGKS)) interacts with ATP. The C4-type zinc-finger motif lies at 761–787 (CEACQGDGVIKIEMHFLPDVYVTCDVC).

The protein belongs to the ABC transporter superfamily. UvrA family. In terms of assembly, forms a heterotetramer with UvrB during the search for lesions.

It localises to the cytoplasm. In terms of biological role, the UvrABC repair system catalyzes the recognition and processing of DNA lesions. UvrA is an ATPase and a DNA-binding protein. A damage recognition complex composed of 2 UvrA and 2 UvrB subunits scans DNA for abnormalities. When the presence of a lesion has been verified by UvrB, the UvrA molecules dissociate. This Rhizobium meliloti (strain 1021) (Ensifer meliloti) protein is UvrABC system protein A.